The following is a 304-amino-acid chain: Putative AraC-like transcription regulator (304 aa).

One can recognise an HTH araC/xylS-type domain in the interval 202-300; sequence ATALTCLHRD…GMPPGDYRKH (99 aa). 2 consecutive DNA-binding regions (H-T-H motif) follow at residues 219-240 and 267-290; these read ADLA…KATV and LASI…KRVL.

The chain is Putative AraC-like transcription regulator from Streptomyces lividans.